Consider the following 466-residue polypeptide: Vacuolar-processing enzyme delta-isozyme (466 aa).

Residues 1 to 24 form the signal peptide; it reads MSSPLGHFQILVFLHALLIFSAES. An N-linked (GlcNAc...) asparagine glycan is attached at N137. Residue H164 is part of the active site. Residue C206 is the Nucleophile of the active site. C239 and C253 form a disulfide bridge. N-linked (GlcNAc...) asparagine glycosylation is present at N322. 2 disulfides stabilise this stretch: C417-C447 and C429-C464.

It belongs to the peptidase C13 family. Post-translationally, auto-catalytic activation. In terms of tissue distribution, seed specific. Restricted to developing seeds at 7 days after anthesis, and, at lower levels, detected in flowers. Detected in siliques, specifically in seed coats (at protein level).

Its subcellular location is the secreted. It is found in the extracellular space. It localises to the cell wall. The protein resides in the vacuole. It carries out the reaction Hydrolysis of proteins and small molecule substrates at -Asn-|-Xaa- bonds.. Strongly inhibited by biotin-YVAD-fmk (a caspase-1 inhibitor) and by Ac-DEVD-fmk. Functionally, asparagine-specific endopeptidase that may be involved in processing of proteins targeted to vacuoles. Probably involved in post-translational proteolysis of seed storage proteins in the protein storage vacuole of developing seeds. Exhibits a caspase-1-like activity in extracellular granules. At the early stage of seed development, required for the formation of the seed coat, by regulating cell death of specific cell layers in inner integument. The polypeptide is Vacuolar-processing enzyme delta-isozyme (Arabidopsis thaliana (Mouse-ear cress)).